We begin with the raw amino-acid sequence, 60 residues long: MAVPKQKRSSSRTHHKRAKIYKAFSVAVTTCPNCGAPKQPHRVCLRCGYYGKKQVFEVAK.

The protein belongs to the bacterial ribosomal protein bL32 family.

This is Large ribosomal subunit protein bL32 from Fervidobacterium nodosum (strain ATCC 35602 / DSM 5306 / Rt17-B1).